Here is a 125-residue protein sequence, read N- to C-terminus: Large ribosomal subunit protein bL12 (125 aa).

Belongs to the bacterial ribosomal protein bL12 family. In terms of assembly, homodimer. Part of the ribosomal stalk of the 50S ribosomal subunit. Forms a multimeric L10(L12)X complex, where L10 forms an elongated spine to which 2 to 4 L12 dimers bind in a sequential fashion. Binds GTP-bound translation factors.

Functionally, forms part of the ribosomal stalk which helps the ribosome interact with GTP-bound translation factors. Is thus essential for accurate translation. The polypeptide is Large ribosomal subunit protein bL12 (Granulibacter bethesdensis (strain ATCC BAA-1260 / CGDNIH1)).